Consider the following 312-residue polypeptide: D-alanine--D-alanine ligase (312 aa).

The ATP-grasp domain occupies 102–307; it reads KKIFKMEGIP…FPELTDRLIK (206 aa). 136 to 191 contributes to the ATP binding site; it reads IKEVGVPAVVKANTQGSTIGITFVHVKEKMAEAIESALKYDQDVLVEQFVAGTEVT. Asp-262, Glu-274, and Asn-276 together coordinate Mg(2+).

It belongs to the D-alanine--D-alanine ligase family. The cofactor is Mg(2+). Mn(2+) is required as a cofactor.

It is found in the cytoplasm. It catalyses the reaction 2 D-alanine + ATP = D-alanyl-D-alanine + ADP + phosphate + H(+). It participates in cell wall biogenesis; peptidoglycan biosynthesis. Its function is as follows. Cell wall formation. The polypeptide is D-alanine--D-alanine ligase (Desulforamulus reducens (strain ATCC BAA-1160 / DSM 100696 / MI-1) (Desulfotomaculum reducens)).